The chain runs to 473 residues: Arginine biosynthesis bifunctional protein ArgJ, mitochondrial (473 aa).

Positions 201, 230, 241, 328, 468, and 473 each coordinate substrate. Threonine 241 serves as the catalytic Nucleophile.

The protein belongs to the ArgJ family. As to quaternary structure, heterodimer of an alpha and a beta chain. The alpha and beta chains are autoproteolytically processed from a single precursor protein within the mitochondrion.

The protein localises to the mitochondrion matrix. It carries out the reaction N(2)-acetyl-L-ornithine + L-glutamate = N-acetyl-L-glutamate + L-ornithine. The enzyme catalyses L-glutamate + acetyl-CoA = N-acetyl-L-glutamate + CoA + H(+). Its pathway is amino-acid biosynthesis; L-arginine biosynthesis; L-ornithine and N-acetyl-L-glutamate from L-glutamate and N(2)-acetyl-L-ornithine (cyclic): step 1/1. It functions in the pathway amino-acid biosynthesis; L-arginine biosynthesis; N(2)-acetyl-L-ornithine from L-glutamate: step 1/4. Functionally, catalyzes two activities which are involved in the cyclic version of arginine biosynthesis: the synthesis of acetylglutamate from glutamate and acetyl-CoA, and of ornithine by transacetylation between acetylornithine and glutamate. The chain is Arginine biosynthesis bifunctional protein ArgJ, mitochondrial from Blastomyces gilchristii (strain SLH14081) (Blastomyces dermatitidis).